The chain runs to 344 residues: Autophagy-related protein 14 (344 aa).

The segment at 3–18 is cysteine repeats; sequence CPICHHRAHVVYCAHC. Positions 25 to 156 form a coiled coil; sequence LLLKLKLDLI…VSKICESARD (132 aa).

It belongs to the ATG14 family. Component of the autophagy-specific VPS34 PI3-kinase complex I composed of VPS15, VPS30, VPS34, ATG14 and ATG38. Interacts directly with ATG38.

Its subcellular location is the preautophagosomal structure membrane. The protein localises to the vacuole membrane. Functionally, required for cytoplasm to vacuole transport (Cvt) and autophagy as a part of the autophagy-specific VPS34 PI3-kinase complex I. This complex is essential to recruit the ATG8-phosphatidylinositol conjugate and the ATG12-ATG5 conjugate to the pre-autophagosomal structure. ATG14 mediates the specific binding of the VPS34 PI3-kinase complex I to the preautophagosomal structure (PAS). The chain is Autophagy-related protein 14 (ATG14) from Saccharomyces cerevisiae (strain ATCC 204508 / S288c) (Baker's yeast).